The primary structure comprises 416 residues: GTPase ERA1, chloroplastic (416 aa).

The transit peptide at 1 to 53 (MELGLALRLVAPPPLLPCLSRRALSLPPDFVSSRVLRGRRIHASRLKHGAGVV) directs the protein to the chloroplast. Residues 117–287 (RSGYVAVLGK…KEWILSKLPL (171 aa)) form the Era-type G domain. A G1 region spans residues 125-132 (GKPNVGKS). 125–132 (GKPNVGKS) provides a ligand contact to GTP. Residues 151–155 (QTTRH) are G2. The segment at 172–175 (DTPG) is G3. GTP-binding positions include 172-176 (DTPGV) and 237-240 (NKKD). Positions 237–240 (NKKD) are G4. Residues 266-268 (ISA) form a G5 region. Residues 318 to 395 (YRQEIPYSCQ…YLEVEVKVKE (78 aa)) form the KH type-2 domain.

The protein belongs to the TRAFAC class TrmE-Era-EngA-EngB-Septin-like GTPase superfamily. Era GTPase family.

It is found in the plastid. The protein resides in the chloroplast stroma. It localises to the chloroplast nucleoid. In terms of biological role, nuclear genome-encoded probable GTPase involved in ribosome biogenesis in chloroplasts. Plays a role in 16S rRNA maturation in plastids and may contribute to the assembly of the small (30S) ribosomal subunit. The chain is GTPase ERA1, chloroplastic from Zea mays (Maize).